The primary structure comprises 62 residues: Small ribosomal subunit protein bS21 (62 aa).

The span at 43–52 shows a compositional bias: basic and acidic residues; sequence VKKKLKSEAA. The tract at residues 43–62 is disordered; it reads VKKKLKSEAARKRKAKKKRF. The span at 53–62 shows a compositional bias: basic residues; sequence RKRKAKKKRF.

This sequence belongs to the bacterial ribosomal protein bS21 family.

This chain is Small ribosomal subunit protein bS21, found in Levilactobacillus brevis (strain ATCC 367 / BCRC 12310 / CIP 105137 / JCM 1170 / LMG 11437 / NCIMB 947 / NCTC 947) (Lactobacillus brevis).